The chain runs to 438 residues: Putative hydrolase MSMEG_3995/MSMEI_3903 (438 aa).

Aspartate 95, aspartate 104, glutamate 143, and histidine 208 together coordinate Zn(2+). Lysine 217 participates in a covalent cross-link: Isoglutamyl lysine isopeptide (Lys-Gln) (interchain with Q-Cter in protein Pup). Histidine 400 is a Zn(2+) binding site.

This sequence belongs to the peptidase M20 family. Zn(2+) serves as cofactor.

This Mycolicibacterium smegmatis (strain ATCC 700084 / mc(2)155) (Mycobacterium smegmatis) protein is Putative hydrolase MSMEG_3995/MSMEI_3903.